A 1071-amino-acid chain; its full sequence is Carbamoyl phosphate synthase pyrimidine-specific large chain (1071 aa).

Positions 1-401 (MPKRVDINKI…SLLKAVRSLE (401 aa)) are carboxyphosphate synthetic domain. ATP is bound by residues R129, R169, G175, G176, K208, I210, E215, G241, I242, H243, Q284, and E298. The ATP-grasp 1 domain occupies 133-327 (RTLMNELNEP…IAKLAAKIAV (195 aa)). Mg(2+) is bound by residues Q284, E298, and N300. The Mn(2+) site is built by Q284, E298, and N300. The segment at 402 to 546 (ADVYHLELKD…YSTYEEENES (145 aa)) is oligomerization domain. Positions 547 to 929 (VVTDKKSVMV…ALYKALIASG (383 aa)) are carbamoyl phosphate synthetic domain. One can recognise an ATP-grasp 2 domain in the interval 671–861 (EQALGELGVP…MANLATKIIL (191 aa)). ATP-binding residues include R707, R746, L748, E752, G777, V778, H779, S780, Q820, and E832. Positions 820, 832, and 834 each coordinate Mg(2+). 3 residues coordinate Mn(2+): Q820, E832, and N834. In terms of domain architecture, MGS-like spans 930 to 1071 (IQIPNYGSVL…NTNQEAAVTI (142 aa)). The segment at 930 to 1071 (IQIPNYGSVL…NTNQEAAVTI (142 aa)) is allosteric domain.

Belongs to the CarB family. As to quaternary structure, composed of two chains; the small (or glutamine) chain promotes the hydrolysis of glutamine to ammonia, which is used by the large (or ammonia) chain to synthesize carbamoyl phosphate. Tetramer of heterodimers (alpha,beta)4. Interacts with BrxC. Requires Mg(2+) as cofactor. Mn(2+) serves as cofactor.

It catalyses the reaction hydrogencarbonate + L-glutamine + 2 ATP + H2O = carbamoyl phosphate + L-glutamate + 2 ADP + phosphate + 2 H(+). It carries out the reaction hydrogencarbonate + NH4(+) + 2 ATP = carbamoyl phosphate + 2 ADP + phosphate + 2 H(+). It participates in amino-acid biosynthesis; L-arginine biosynthesis; carbamoyl phosphate from bicarbonate: step 1/1. The protein operates within pyrimidine metabolism; UMP biosynthesis via de novo pathway; (S)-dihydroorotate from bicarbonate: step 1/3. In terms of biological role, small subunit of the glutamine-dependent carbamoyl phosphate synthetase (CPSase). CPSase catalyzes the formation of carbamoyl phosphate from the ammonia moiety of glutamine, carbonate, and phosphate donated by ATP, constituting the first step of the biosynthetic pathway leading to pyrimidine nucleotides. The large subunit (synthetase) binds the substrates ammonia (free or transferred from glutamine from the small subunit), hydrogencarbonate and ATP and carries out an ATP-coupled ligase reaction, activating hydrogencarbonate by forming carboxy phosphate which reacts with ammonia to form carbamoyl phosphate. This chain is Carbamoyl phosphate synthase pyrimidine-specific large chain (pyrAB), found in Bacillus subtilis (strain 168).